We begin with the raw amino-acid sequence, 361 residues long: Probable lipid desaturase ADS3.2, chloroplastic (361 aa).

A chloroplast-targeting transit peptide spans 1–57; that stretch reads MMSLSTTLKPLSHFSPFVKRHNPKTNNTLFTLDTHNFTNSFWSKRGGSVSHRKHTVV. Helical transmembrane passes span 99–118 and 122–139; these read LVIF…YFSW and WVFP…TLSY. A Histidine box-1 motif is present at residues 140–145; sequence HRNLSH. Residues 177–181 carry the Histidine box-2 motif; the sequence is HRYHH. The chain crosses the membrane as a helical span at residues 246–266; it reads FLFYFCGGMPLLVWGIGITIA. A Histidine box-3 motif is present at residues 309–313; it reads HNNHH.

Belongs to the fatty acid desaturase type 1 family. It depends on Fe(2+) as a cofactor.

It is found in the plastid. The protein localises to the chloroplast membrane. It functions in the pathway lipid metabolism; polyunsaturated fatty acid biosynthesis. This chain is Probable lipid desaturase ADS3.2, chloroplastic, found in Arabidopsis thaliana (Mouse-ear cress).